Reading from the N-terminus, the 209-residue chain is MTSSALVPSTASEGDRIAEVARNTAETRIRVRVNLDGTGNARLSSGIGFFDHMLDQIARHGLIDLDIECEGDLHIDGHHTVEDVGITLGQAFARAVGDKKGIRRYGHAYVPLDEALSRVVVDFSGRPGLHMDVKFTAGSIGQLDTQLVYEFFQGFVNHAGVTLHIDNLKGFNAHHQCETIFKAFARALRAALARDPRSAGVIPSTKGSL.

This sequence belongs to the imidazoleglycerol-phosphate dehydratase family.

Its subcellular location is the cytoplasm. It catalyses the reaction D-erythro-1-(imidazol-4-yl)glycerol 3-phosphate = 3-(imidazol-4-yl)-2-oxopropyl phosphate + H2O. It functions in the pathway amino-acid biosynthesis; L-histidine biosynthesis; L-histidine from 5-phospho-alpha-D-ribose 1-diphosphate: step 6/9. The sequence is that of Imidazoleglycerol-phosphate dehydratase from Paracidovorax citrulli (strain AAC00-1) (Acidovorax citrulli).